The following is a 510-amino-acid chain: Probable inositol 3-phosphate synthase isozyme 3 (510 aa).

Belongs to the myo-inositol 1-phosphate synthase family. The cofactor is NAD(+). Expressed in siliques, leaves, roots, seed endosperm, but not in embryos. Highest expression in roots. Confined to vascular tissue and hydathodes of leaves.

Its subcellular location is the cytoplasm. The enzyme catalyses D-glucose 6-phosphate = 1D-myo-inositol 3-phosphate. Its pathway is polyol metabolism; myo-inositol biosynthesis; myo-inositol from D-glucose 6-phosphate: step 1/2. Its function is as follows. Key enzyme in myo-inositol biosynthesis pathway that catalyzes the conversion of glucose 6-phosphate to 1-myo-inositol 1-phosphate in a NAD-dependent manner. This chain is Probable inositol 3-phosphate synthase isozyme 3 (IPS3), found in Arabidopsis thaliana (Mouse-ear cress).